A 1053-amino-acid chain; its full sequence is Putative ABC transporter C family member 15 (1053 aa).

The region spanning 1–180 (MSVDVQRITD…LPDLLSALVQ (180 aa)) is the ABC transmembrane type-1 1 domain. 4 helical membrane passes run 11–31 (FIWY…AIYI), 36–56 (LGLG…CNYP), 125–145 (FILW…CMLM), and 151–171 (AGAV…IFGL). The ABC transporter 1 domain maps to 214–437 (VEIENGAFSW…NIGFEVLTQC (224 aa)). 249–256 (GAVGSGKS) lines the ATP pocket. 5 consecutive transmembrane segments (helical) span residues 481 to 503 (LLVP…SNYW), 523 to 543 (ILLV…ARTI), 595 to 615 (MAVK…TIFV), 714 to 734 (LSHF…EGVI), and 738 to 758 (IAGL…TVIW). In terms of domain architecture, ABC transmembrane type-1 2 spans 483–765 (VPFIILAQSC…VIWNICNAEN (283 aa)). An ABC transporter 2 domain is found at 804-1036 (FRDLQVRYAE…EDSFFSKLIK (233 aa)). 836 to 843 (GRTGSGKS) provides a ligand contact to ATP.

This sequence belongs to the ABC transporter superfamily. ABCC family. Conjugate transporter (TC 3.A.1.208) subfamily.

The protein resides in the membrane. It carries out the reaction ATP + H2O + xenobioticSide 1 = ADP + phosphate + xenobioticSide 2.. Pump for glutathione S-conjugates. The polypeptide is Putative ABC transporter C family member 15 (ABCC15) (Arabidopsis thaliana (Mouse-ear cress)).